Reading from the N-terminus, the 185-residue chain is Ribosome-recycling factor (185 aa).

The protein belongs to the RRF family.

It is found in the cytoplasm. Its function is as follows. Responsible for the release of ribosomes from messenger RNA at the termination of protein biosynthesis. May increase the efficiency of translation by recycling ribosomes from one round of translation to another. The sequence is that of Ribosome-recycling factor from Idiomarina loihiensis (strain ATCC BAA-735 / DSM 15497 / L2-TR).